Consider the following 349-residue polypeptide: Anthranilate phosphoribosyltransferase (349 aa).

Residues glycine 82, glycine 85–aspartate 86, asparagine 92–threonine 95, lysine 110–glycine 118, and serine 122 contribute to the 5-phospho-alpha-D-ribose 1-diphosphate site. Residue glycine 82 participates in anthranilate binding. A Mg(2+)-binding site is contributed by serine 94. Asparagine 113 lines the anthranilate pocket. Arginine 168 is a binding site for anthranilate. Residues aspartate 227 and glutamate 228 each contribute to the Mg(2+) site.

Belongs to the anthranilate phosphoribosyltransferase family. In terms of assembly, homodimer. It depends on Mg(2+) as a cofactor.

It carries out the reaction N-(5-phospho-beta-D-ribosyl)anthranilate + diphosphate = 5-phospho-alpha-D-ribose 1-diphosphate + anthranilate. It functions in the pathway amino-acid biosynthesis; L-tryptophan biosynthesis; L-tryptophan from chorismate: step 2/5. Functionally, catalyzes the transfer of the phosphoribosyl group of 5-phosphorylribose-1-pyrophosphate (PRPP) to anthranilate to yield N-(5'-phosphoribosyl)-anthranilate (PRA). In Pseudomonas syringae pv. tomato (strain ATCC BAA-871 / DC3000), this protein is Anthranilate phosphoribosyltransferase.